A 392-amino-acid polypeptide reads, in one-letter code: MSFVEAKRIRNLPPYLFARIEQLIADKKAQGVDVISLGIGDPDVPTPDHIIEAAEKELKIPANHQYPSSAGMPAYRRAVADWYARRFGVELDPQREVVSLIGSKEGIAHLPWCFVDPGDVVLVPDPGYPVYAGGTILAGGIPHPVPLTAGNGFLPDLAAIPAETARRAKVMFINYPNNPTGAVASKEFFARVVDFAREYGILVCHDAAYSEIAFDGYRPPSFLEVAGAREVGIEFHSVSKTYNMTGWRAGWAAGNAGAVEALGRLKSNLDSGVFQVVQYAAIAALNGPQDGVQSLCEMYRERRDLVVDTLNDLGWRLTRPRATFYIWAPVPAGHDASSFAEMVLEKAGVVITPGTGYGTYGEGYFRISLTLPTPRLVEAMERLRGCLGRVTF.

Substrate-binding residues include Y15, G40, K104, Y128, and N178. Residues S103 to K104, Y128, N178, Y209, and S237 to S239 each bind pyridoxal 5'-phosphate. K240 carries the N6-(pyridoxal phosphate)lysine modification. R248 is a pyridoxal 5'-phosphate binding site. Substrate is bound at residue R366.

It belongs to the class-I pyridoxal-phosphate-dependent aminotransferase family. LL-diaminopimelate aminotransferase subfamily. As to quaternary structure, homodimer. Pyridoxal 5'-phosphate is required as a cofactor.

The catalysed reaction is (2S,6S)-2,6-diaminopimelate + 2-oxoglutarate = (S)-2,3,4,5-tetrahydrodipicolinate + L-glutamate + H2O + H(+). Its pathway is amino-acid biosynthesis; L-lysine biosynthesis via DAP pathway; LL-2,6-diaminopimelate from (S)-tetrahydrodipicolinate (aminotransferase route): step 1/1. Its function is as follows. Involved in the synthesis of meso-diaminopimelate (m-DAP or DL-DAP), required for both lysine and peptidoglycan biosynthesis. Catalyzes the direct conversion of tetrahydrodipicolinate to LL-diaminopimelate. This chain is LL-diaminopimelate aminotransferase, found in Desulforudis audaxviator (strain MP104C).